Consider the following 242-residue polypeptide: Large ribosomal subunit protein uL30y (242 aa).

It belongs to the universal ribosomal protein uL30 family.

This chain is Large ribosomal subunit protein uL30y (RPL7B), found in Arabidopsis thaliana (Mouse-ear cress).